Consider the following 332-residue polypeptide: Chorismate synthase (332 aa).

Arg-46 provides a ligand contact to NADP(+). FMN contacts are provided by residues 123 to 125, Gly-253, 268 to 272, and Arg-295; these read HFS and KPTSS.

The protein belongs to the chorismate synthase family. As to quaternary structure, homotetramer. FMNH2 is required as a cofactor.

It carries out the reaction 5-O-(1-carboxyvinyl)-3-phosphoshikimate = chorismate + phosphate. Its pathway is metabolic intermediate biosynthesis; chorismate biosynthesis; chorismate from D-erythrose 4-phosphate and phosphoenolpyruvate: step 7/7. Catalyzes the anti-1,4-elimination of the C-3 phosphate and the C-6 proR hydrogen from 5-enolpyruvylshikimate-3-phosphate (EPSP) to yield chorismate, which is the branch point compound that serves as the starting substrate for the three terminal pathways of aromatic amino acid biosynthesis. This reaction introduces a second double bond into the aromatic ring system. This chain is Chorismate synthase, found in Chitinophaga pinensis (strain ATCC 43595 / DSM 2588 / LMG 13176 / NBRC 15968 / NCIMB 11800 / UQM 2034).